The chain runs to 651 residues: Receptor-like serine/threonine-protein kinase At4g25390 (651 aa).

A signal peptide spans 1-25 (MPSRSISAPVPVLAPAPIVSSLVPA). The Extracellular portion of the chain corresponds to 26–40 (APSGHQNKTTRIFPP). An N-linked (GlcNAc...) asparagine glycan is attached at N32. The helical transmembrane segment at 41 to 61 (FVVAGAGAGFSLFITLSVCFC) threads the bilayer. Residues 62-651 (KFSRKRSSPP…PLKTTRKQRR (590 aa)) lie on the Cytoplasmic side of the membrane. The segment at 66–87 (KRSSPPAENASSSPRRPSPREF) is disordered. The span at 69–87 (SPPAENASSSPRRPSPREF) shows a compositional bias: low complexity. Residues 99–633 (FSQANRLGQG…LKGEVNLPEL (535 aa)) enclose the Protein kinase domain. ATP contacts are provided by residues 105–113 (LGQGGFGVV) and K127. The active-site Proton acceptor is D225.

It belongs to the protein kinase superfamily. Ser/Thr protein kinase family.

It is found in the cell membrane. The catalysed reaction is L-seryl-[protein] + ATP = O-phospho-L-seryl-[protein] + ADP + H(+). It catalyses the reaction L-threonyl-[protein] + ATP = O-phospho-L-threonyl-[protein] + ADP + H(+). The sequence is that of Receptor-like serine/threonine-protein kinase At4g25390 from Arabidopsis thaliana (Mouse-ear cress).